A 142-amino-acid chain; its full sequence is UPF0306 protein Ent638_3591 (142 aa).

The protein belongs to the UPF0306 family.

This Enterobacter sp. (strain 638) protein is UPF0306 protein Ent638_3591.